The following is a 94-amino-acid chain: Small ribosomal subunit protein uS19 (94 aa).

This sequence belongs to the universal ribosomal protein uS19 family.

Its function is as follows. Protein S19 forms a complex with S13 that binds strongly to the 16S ribosomal RNA. This chain is Small ribosomal subunit protein uS19, found in Acetivibrio thermocellus (strain ATCC 27405 / DSM 1237 / JCM 9322 / NBRC 103400 / NCIMB 10682 / NRRL B-4536 / VPI 7372) (Clostridium thermocellum).